A 302-amino-acid polypeptide reads, in one-letter code: N(G),N(G)-dimethylarginine dimethylaminohydrolase (302 aa).

Residues Asp102, Arg127, and Arg172 each coordinate substrate. Residue His201 is the Proton donor of the active site. Residue Cys295 is the Nucleophile of the active site.

This sequence belongs to the DDAH family.

It carries out the reaction N(omega),N(omega)-dimethyl-L-arginine + H2O = dimethylamine + L-citrulline. The catalysed reaction is N(omega)-methyl-L-arginine + H2O = L-citrulline + methylamine. Hydrolyzes N(G),N(G)-dimethyl-L-arginine (ADMA) and N(G)-monomethyl-L-arginine (MMA). The sequence is that of N(G),N(G)-dimethylarginine dimethylaminohydrolase from Mycobacterium tuberculosis (strain ATCC 25618 / H37Rv).